Reading from the N-terminus, the 462-residue chain is MIQIKLWQGRFSKDTARIFDEFNASIMVDINLFEYDVMGSVAHVKMLSKCDIIPEDEGKLIVNTLYEILNDFKEGKIEFDMSDEDVHMLIEKELIKRIGQVGKKVHTARSRNDQVVLDERLFCREKNLYLQELIKNLIDTIIKLAEENIDTIMPGFTHLQKAQPVLFSHYILAYAQMLKRDLLRFRQNFISINLNPLGSAALAGTTFDIDRFFVADQLEFDGVTENSIDTVSDRDFILEMLFNIAMLQMHLSRLAEDFIIFNTDEFRFIELDDAFCSGSSIMPQKKNPDALELIRGKTGRTFGNLIGLLTVLKALPLSYNKDMQEDKEFLFDSIDTAEKSLIIVNEILKTLKVNKENMLLACKSGFINATDLADYLVTKGVAFRDAHFVVGNIVKYCIENNKSLEELSTEEFKRFCDKIEEDVFKFISLENCIKRRKSYGATSPELVKKQIENLKEFLRAYE.

The protein belongs to the lyase 1 family. Argininosuccinate lyase subfamily.

Its subcellular location is the cytoplasm. It catalyses the reaction 2-(N(omega)-L-arginino)succinate = fumarate + L-arginine. Its pathway is amino-acid biosynthesis; L-arginine biosynthesis; L-arginine from L-ornithine and carbamoyl phosphate: step 3/3. This Caldicellulosiruptor saccharolyticus (strain ATCC 43494 / DSM 8903 / Tp8T 6331) protein is Argininosuccinate lyase.